A 645-amino-acid chain; its full sequence is Crossover junction endonuclease mus-81 (645 aa).

2 disordered regions span residues 98 to 119 and 219 to 310; these read LAAA…RTAR and GVAG…EDRK. Over residues 223-252 the composition is skewed to polar residues; that stretch reads SANTSRNAIASGSGTSNPNRSENVNPNRQD. The segment covering 296-305 has biased composition (acidic residues); the sequence is DSDDEDPKYD. Positions 353–459 constitute an ERCC4 domain; that stretch reads ELVLDTREVQ…NVVYIIENYN (107 aa).

The protein belongs to the XPF family. As to quaternary structure, interacts with eme-1. The cofactor is Mg(2+).

The protein localises to the nucleus. In terms of biological role, interacts with eme-1 to form a DNA structure-specific endonuclease with substrate preference for branched DNA structures with a 5'-end at the branch nick. Typical substrates include 3'-flap structures, D-loops, replication forks and nicked Holliday junctions. May be required in mitosis for the processing of stalled or collapsed replication fork intermediates. May be required in meiosis for the repair of meiosis-specific double strand breaks subsequent to single-end invasion (SEI). The sequence is that of Crossover junction endonuclease mus-81 (mus-81) from Neurospora crassa (strain ATCC 24698 / 74-OR23-1A / CBS 708.71 / DSM 1257 / FGSC 987).